The sequence spans 497 residues: Serine hydroxymethyltransferase, mitochondrial (497 aa).

The transit peptide at 1–27 directs the protein to the mitochondrion; the sequence is MFIRRLHTSSRRLTCGEALRACQQTGA. K272 carries the post-translational modification N6-(pyridoxal phosphate)lysine.

This sequence belongs to the SHMT family. Homotetramer. It depends on pyridoxal 5'-phosphate as a cofactor.

Its subcellular location is the mitochondrion. The catalysed reaction is (6R)-5,10-methylene-5,6,7,8-tetrahydrofolate + glycine + H2O = (6S)-5,6,7,8-tetrahydrofolate + L-serine. It functions in the pathway one-carbon metabolism; tetrahydrofolate interconversion. Interconversion of serine and glycine. In Eremothecium gossypii (strain ATCC 10895 / CBS 109.51 / FGSC 9923 / NRRL Y-1056) (Yeast), this protein is Serine hydroxymethyltransferase, mitochondrial (SHM1).